A 633-amino-acid polypeptide reads, in one-letter code: MSATSSKETLGFQAEVKQLLQLMIHSLYSNKDIFLRELISNASDAADKLRFEALSDAALFENDPELKIRIAFDRDARTLTISDNGIGMSRQEVIDHIGTIAKSGTREFFSQLSGDQKKDAALIGQFGVGFYSAFIVADRVTLTTRRAGLTAEHGVRWESEGAGDYTLETVEKPQRGTEIVLHLREGEDEFLSDWKIKSVIRTYSDHITLPIVMKKTEWKDGVETPTDEDETVNKASALWARPKKDISDDEYNEFYKHVAHDFEPPLAWSHNRVEGKQEYISLLYVPSHAPFDLYDREKRHGIKLYVRRVFIMDDAEQLMPQYLRFVRGVIDSADLPLNVSREILQSSRDIDAIKNGSVKKVLGMLEDLAENQPEKYVEFWKEFGKVMKEGPGEDFANKEKIAGLLRFASTHTDTDAQVVSLKDYVGRMKEGQTAIYYITADSFAAAQHSPHLEIFRKKGIEVLLLSDRVDEWLTGNLHEFDGKPLKSVAKGGLDLGELEDEAEKTAQKEAEESMKPLVERIKAMLGERVKDVRVTHRLTDSPACLVTGEGDMSANLERLLKAAGQAAPTVKPTLEINPSHALVTRLDSESDEDRFKDWANLLFEQALLAEGGQLDDPASFVRRLNGLLAMLPG.

Positions 1-341 are a; substrate-binding; sequence MSATSSKETL…SADLPLNVSR (341 aa). Residues 342-558 form a b region; that stretch reads EILQSSRDID…EGDMSANLER (217 aa). Residues 559–633 are c; sequence LLKAAGQAAP…LNGLLAMLPG (75 aa).

Belongs to the heat shock protein 90 family. Homodimer.

It localises to the cytoplasm. Its function is as follows. Molecular chaperone. Has ATPase activity. In Thiobacillus denitrificans (strain ATCC 25259 / T1), this protein is Chaperone protein HtpG.